Here is an 89-residue protein sequence, read N- to C-terminus: MSVADIKKAEIVSQFQRAQGDTGSPEVQVALLTARINELTGHFKEHAKDHHSRRGLLRMVSRRRKLLDYLKGRNPDSYRALIEKLGLRK.

This sequence belongs to the universal ribosomal protein uS15 family. In terms of assembly, part of the 30S ribosomal subunit. Forms a bridge to the 50S subunit in the 70S ribosome, contacting the 23S rRNA.

One of the primary rRNA binding proteins, it binds directly to 16S rRNA where it helps nucleate assembly of the platform of the 30S subunit by binding and bridging several RNA helices of the 16S rRNA. In terms of biological role, forms an intersubunit bridge (bridge B4) with the 23S rRNA of the 50S subunit in the ribosome. This Bordetella avium (strain 197N) protein is Small ribosomal subunit protein uS15.